The chain runs to 131 residues: C-glycoside deglycosidase beta subunit (131 aa).

The protein belongs to the C-glycoside deglycosidase beta subunit family. In terms of assembly, heterodimer composed of an alpha subunit (CarB1) and a beta subunit (CarC1). Mg(2+) serves as cofactor.

It carries out the reaction 3''-dehydroisovitexin = 1,5-anhydro-D-erythro-hex-1-en-3-ulose + apigenin. With respect to regulation, activity is strongly reduced in the presence of chelating agents. Functionally, carbon-carbon bond-cleaving enzyme which participates in the metabolism of C-glycosides. Acts on the C6-glycosylated compound 3''-dehydroisovitexin (3''-oxo-isovitexin). Shows weak activity with 3''-dehydroisoorientin (3''-oxo-homoorientin) and 3'-dehydromangiferin (3'-oxo-mangiferin). This is C-glycoside deglycosidase beta subunit from Arthrobacter globiformis (strain ATCC 8010 / DSM 20124 / JCM 1332 / NBRC 12137 / NCIMB 8907 / NRRL B-2979 / 168).